A 213-amino-acid chain; its full sequence is 3-isopropylmalate dehydratase small subunit (213 aa).

This sequence belongs to the LeuD family. LeuD type 1 subfamily. As to quaternary structure, heterodimer of LeuC and LeuD.

It carries out the reaction (2R,3S)-3-isopropylmalate = (2S)-2-isopropylmalate. The protein operates within amino-acid biosynthesis; L-leucine biosynthesis; L-leucine from 3-methyl-2-oxobutanoate: step 2/4. Its function is as follows. Catalyzes the isomerization between 2-isopropylmalate and 3-isopropylmalate, via the formation of 2-isopropylmaleate. In Pseudomonas savastanoi pv. phaseolicola (strain 1448A / Race 6) (Pseudomonas syringae pv. phaseolicola (strain 1448A / Race 6)), this protein is 3-isopropylmalate dehydratase small subunit.